Consider the following 51-residue polypeptide: Large ribosomal subunit protein bL33 (51 aa).

Belongs to the bacterial ribosomal protein bL33 family.

The protein is Large ribosomal subunit protein bL33 of Francisella tularensis subsp. tularensis (strain FSC 198).